A 142-amino-acid polypeptide reads, in one-letter code: NTF2-related export protein 2 (142 aa).

The 120-residue stretch at 17–136 folds into the NTF2 domain; the sequence is AAEEFVNIYY…WKIASDCFRF (120 aa).

As to quaternary structure, associates with NXF1, NXF2, NXF3 and NXF5.

Its subcellular location is the nucleus. The protein localises to the cytoplasm. In terms of biological role, regulator of protein export for NES-containing proteins. Also plays a role in mRNA nuclear export. The sequence is that of NTF2-related export protein 2 from Homo sapiens (Human).